Here is a 241-residue protein sequence, read N- to C-terminus: 3-deoxy-D-manno-octulosonic acid kinase (241 aa).

Residue Asp-171 is part of the active site.

Belongs to the protein kinase superfamily. KdkA/RfaP family.

It is found in the cell inner membrane. The catalysed reaction is an alpha-Kdo-(2-&gt;6)-lipid IVA + ATP = a 4-O-phospho-alpha-Kdo-(2-&gt;6)-lipid IVA + ADP + H(+). Its pathway is bacterial outer membrane biogenesis; LPS core biosynthesis. Catalyzes the ATP-dependent phosphorylation of the 3-deoxy-D-manno-octulosonic acid (Kdo) residue in Kdo-lipid IV(A) at the 4-OH position. The polypeptide is 3-deoxy-D-manno-octulosonic acid kinase (Haemophilus influenzae (strain PittGG)).